Reading from the N-terminus, the 283-residue chain is uncharacterized protein (283 aa).

This is an uncharacterized protein from Streptomyces coelicolor (strain ATCC BAA-471 / A3(2) / M145).